Consider the following 242-residue polypeptide: ATP synthase subunit a (242 aa).

6 helical membrane passes run 29–49 (SSIY…LAFY), 84–104 (FIPL…LGMT), 114–134 (IIVT…VGFV), 140–160 (FLTL…MIVI), 181–201 (MAGH…MIYL), and 203–223 (FLPI…AILQ).

This sequence belongs to the ATPase A chain family. As to quaternary structure, F-type ATPases have 2 components, CF(1) - the catalytic core - and CF(0) - the membrane proton channel. CF(1) has five subunits: alpha(3), beta(3), gamma(1), delta(1), epsilon(1). CF(0) has three main subunits: a(1), b(2) and c(9-12). The alpha and beta chains form an alternating ring which encloses part of the gamma chain. CF(1) is attached to CF(0) by a central stalk formed by the gamma and epsilon chains, while a peripheral stalk is formed by the delta and b chains.

The protein localises to the cell inner membrane. In terms of biological role, key component of the proton channel; it plays a direct role in the translocation of protons across the membrane. The chain is ATP synthase subunit a from Rickettsia conorii (strain ATCC VR-613 / Malish 7).